Here is a 192-residue protein sequence, read N- to C-terminus: Small ribosomal subunit protein bS16 (192 aa).

The segment covering glutamate 149–alanine 161 has biased composition (basic and acidic residues). Residues glutamate 149 to glutamate 192 are disordered. Residues methionine 178–glutamate 192 are compositionally biased toward low complexity.

This sequence belongs to the bacterial ribosomal protein bS16 family.

The sequence is that of Small ribosomal subunit protein bS16 from Porphyromonas gingivalis (strain ATCC 33277 / DSM 20709 / CIP 103683 / JCM 12257 / NCTC 11834 / 2561).